Reading from the N-terminus, the 420-residue chain is UPF0229 protein LPC_3097 (420 aa).

The disordered stretch occupies residues 83 to 107 (IAGDRIKRPGGGAGGAGGNASDSGE). The span at 91–100 (PGGGAGGAGG) shows a compositional bias: gly residues.

It belongs to the UPF0229 family.

The polypeptide is UPF0229 protein LPC_3097 (Legionella pneumophila (strain Corby)).